Consider the following 301-residue polypeptide: Protoheme IX farnesyltransferase (301 aa).

The next 8 membrane-spanning stretches (helical) occupy residues 30 to 50, 55 to 75, 106 to 126, 127 to 147, 152 to 172, 177 to 197, 233 to 253, and 281 to 301; these read VISL…PKAI, IIVS…GGMI, AYAI…LANP, LTAL…SIWL, WWNI…GFAA, FTLL…GHFW, ALMV…YLIV, and FKLS…VKLI.

The protein belongs to the UbiA prenyltransferase family. Protoheme IX farnesyltransferase subfamily.

It is found in the cell membrane. It catalyses the reaction heme b + (2E,6E)-farnesyl diphosphate + H2O = Fe(II)-heme o + diphosphate. It functions in the pathway porphyrin-containing compound metabolism; heme O biosynthesis; heme O from protoheme: step 1/1. Converts heme B (protoheme IX) to heme O by substitution of the vinyl group on carbon 2 of heme B porphyrin ring with a hydroxyethyl farnesyl side group. In Sulfurisphaera tokodaii (strain DSM 16993 / JCM 10545 / NBRC 100140 / 7) (Sulfolobus tokodaii), this protein is Protoheme IX farnesyltransferase.